The following is a 742-amino-acid chain: Clamp-binding protein CrfC (742 aa).

Residues Gln-41–Pro-45 form a clamp-binding consensus region. Residues Ser-66–Pro-402 enclose the Dynamin-type G domain. Residues Gly-76–Ser-83 form a G1 motif region. The interval Met-102–Ala-104 is G2 motif. A G3 motif region spans residues Asp-236 to Gly-239. Positions Asn-297–Asp-300 are G4 motif. Residues Phe-331–Ser-334 are G5 motif. Residues Arg-440–Val-472 adopt a coiled-coil conformation.

Belongs to the TRAFAC class dynamin-like GTPase superfamily. Dynamin/Fzo/YdjA family. In terms of assembly, forms homooligomers. Binds to the beta sliding clamp processivity factor (DnaN) in the presence and absence of DNA, may bind to the clamp itself as homodimers or trimers. Homooligomers may be able to bind more than 1 clamp complex.

It localises to the cytoplasm. Functionally, important for the colocalization of sister nascent DNA strands after replication fork passage during DNA replication, and for positioning and subsequent partitioning of sister chromosomes. Does not have GTPase activity on its own. This is Clamp-binding protein CrfC (crfC) from Escherichia coli.